A 502-amino-acid chain; its full sequence is uncharacterized protein (502 aa).

This is an uncharacterized protein from Agrobacterium vitis (Rhizobium vitis).